Here is a 156-residue protein sequence, read N- to C-terminus: Small ribosomal subunit protein uS7 (156 aa).

This sequence belongs to the universal ribosomal protein uS7 family. Part of the 30S ribosomal subunit. Contacts proteins S9 and S11.

Functionally, one of the primary rRNA binding proteins, it binds directly to 16S rRNA where it nucleates assembly of the head domain of the 30S subunit. Is located at the subunit interface close to the decoding center, probably blocks exit of the E-site tRNA. This chain is Small ribosomal subunit protein uS7, found in Dichelobacter nodosus (strain VCS1703A).